Reading from the N-terminus, the 536-residue chain is Formate--tetrahydrofolate ligase (536 aa).

51–58 (TAAGEGKT) provides a ligand contact to ATP.

This sequence belongs to the formate--tetrahydrofolate ligase family.

The catalysed reaction is (6S)-5,6,7,8-tetrahydrofolate + formate + ATP = (6R)-10-formyltetrahydrofolate + ADP + phosphate. The protein operates within one-carbon metabolism; tetrahydrofolate interconversion. This chain is Formate--tetrahydrofolate ligase, found in Thermoplasma volcanium (strain ATCC 51530 / DSM 4299 / JCM 9571 / NBRC 15438 / GSS1).